A 438-amino-acid polypeptide reads, in one-letter code: Enolase (438 aa).

2 residues coordinate substrate: histidine 159 and glutamate 168. Glutamate 211 serves as the catalytic Proton donor. Residues aspartate 246, glutamate 297, and aspartate 322 each contribute to the Mg(2+) site. Residues glutamate 297 and aspartate 322 each contribute to the substrate site. The Proton acceptor role is filled by lysine 347. Residues 374-377 (SHRS) and lysine 398 each bind substrate.

Belongs to the enolase family. Homodimer. It depends on Mg(2+) as a cofactor.

Its subcellular location is the cytoplasm. It carries out the reaction (2R)-2-phosphoglycerate = phosphoenolpyruvate + H2O. It functions in the pathway carbohydrate degradation; glycolysis; pyruvate from D-glyceraldehyde 3-phosphate: step 4/5. In terms of biological role, involved in osmoadaptation. This Emericella nidulans (strain FGSC A4 / ATCC 38163 / CBS 112.46 / NRRL 194 / M139) (Aspergillus nidulans) protein is Enolase (enoA).